Reading from the N-terminus, the 220-residue chain is MKVAGVDEAGRGPVIGPLVIGVAVIDEKNIERLRDIGVKDSKQLTPGQREKLFSKLIDILDDYYVLLVTPKEIDERHHSMNELEAEKFVVALNSLRIKPQKIYVDSADVDPKRFASLIKAGLKYEATVIAEHKADAKYEIVSAASIIAKVTRDREIEKLKQKYGEFGSGYPSDPRTKEWLEEYYKQYGDFPPIVRRTWETARKIEERFRKNQLTLDKFLK.

Residues 1 to 210 enclose the RNase H type-2 domain; sequence MKVAGVDEAG…ARKIEERFRK (210 aa). D7, E8, and D105 together coordinate a divalent metal cation.

It belongs to the RNase HII family. The cofactor is Mn(2+). It depends on Mg(2+) as a cofactor.

It is found in the cytoplasm. The catalysed reaction is Endonucleolytic cleavage to 5'-phosphomonoester.. Functionally, endonuclease that specifically degrades the RNA of RNA-DNA hybrids. The chain is Ribonuclease HII (rnhB) from Pyrococcus horikoshii (strain ATCC 700860 / DSM 12428 / JCM 9974 / NBRC 100139 / OT-3).